The sequence spans 449 residues: Jacalin-related lectin 20 (449 aa).

Disordered regions lie at residues 1–20 (MAQR…DDGA) and 294–314 (APPI…GDGG). Ala2 is modified (N-acetylalanine). Jacalin-type lectin domains follow at residues 2 to 144 (AQRL…YFTP), 147 to 294 (PIKQ…HFGA), and 303 to 446 (TEKL…TVAP).

The protein belongs to the jacalin lectin family.

The protein is Jacalin-related lectin 20 (JAL20) of Arabidopsis thaliana (Mouse-ear cress).